The sequence spans 681 residues: Potassium-transporting ATPase ATP-binding subunit (681 aa).

Helical transmembrane passes span 30-50 (LLVY…FFGI), 59-79 (LAIA…EAIA), 216-236 (ILLV…LPFT), and 255-275 (IALL…SIGI). The active-site 4-aspartylphosphate intermediate is the Asp306. ATP-binding positions include Asp343, Glu347, 376–383 (FTATTRMS), and Lys394. Asp517 and Asp521 together coordinate Mg(2+). 3 helical membrane passes run 587–607 (FAII…LNLM), 615–635 (AILS…PLSL), and 661–681 (LIAP…LGIV).

The protein belongs to the cation transport ATPase (P-type) (TC 3.A.3) family. Type IA subfamily. As to quaternary structure, the system is composed of three essential subunits: KdpA, KdpB and KdpC.

Its subcellular location is the cell membrane. It catalyses the reaction K(+)(out) + ATP + H2O = K(+)(in) + ADP + phosphate + H(+). Its function is as follows. Part of the high-affinity ATP-driven potassium transport (or Kdp) system, which catalyzes the hydrolysis of ATP coupled with the electrogenic transport of potassium into the cytoplasm. This subunit is responsible for energy coupling to the transport system and for the release of the potassium ions to the cytoplasm. This Listeria monocytogenes serovar 1/2a (strain ATCC BAA-679 / EGD-e) protein is Potassium-transporting ATPase ATP-binding subunit.